The primary structure comprises 322 residues: Olfactory receptor 1J1 (322 aa).

The Extracellular portion of the chain corresponds to Met-1 to Ala-25. Residue Asn-5 is glycosylated (N-linked (GlcNAc...) asparagine). Residues Val-26 to Ile-49 traverse the membrane as a helical segment. At Gln-50–Thr-57 the chain is on the cytoplasmic side. Residues Pro-58–Pro-79 traverse the membrane as a helical segment. Residues Lys-80–Gln-100 are Extracellular-facing. Cysteines 97 and 189 form a disulfide. Residues Thr-101–Tyr-120 traverse the membrane as a helical segment. Residues Asp-121–Ser-139 are Cytoplasmic-facing. Residues Gln-140–Leu-158 traverse the membrane as a helical segment. Topologically, residues His-159–Gln-196 are extracellular. The chain crosses the membrane as a helical span at residues Leu-197–Gly-219. Residues His-220–Lys-236 are Cytoplasmic-facing. Residues Ala-237 to Tyr-259 form a helical membrane-spanning segment. The Extracellular segment spans residues Phe-260–Ile-272. A helical transmembrane segment spans residues Ile-273–Leu-292. Topologically, residues Arg-293–Gly-322 are cytoplasmic.

The protein belongs to the G-protein coupled receptor 1 family.

The protein resides in the cell membrane. Odorant receptor. This Homo sapiens (Human) protein is Olfactory receptor 1J1.